The primary structure comprises 598 residues: Arginine--tRNA ligase (598 aa).

The 'HIGH' region signature appears at 140-150 (ANPTGPLHVGH).

Belongs to the class-I aminoacyl-tRNA synthetase family. As to quaternary structure, monomer.

Its subcellular location is the cytoplasm. It carries out the reaction tRNA(Arg) + L-arginine + ATP = L-arginyl-tRNA(Arg) + AMP + diphosphate. This Synechococcus sp. (strain JA-3-3Ab) (Cyanobacteria bacterium Yellowstone A-Prime) protein is Arginine--tRNA ligase.